A 76-amino-acid chain; its full sequence is ATP synthase subunit c (76 aa).

2 consecutive transmembrane segments (helical) span residues 5–25 (GIIA…GIGI) and 54–74 (AALA…LVFL).

The protein belongs to the ATPase C chain family. F-type ATPases have 2 components, F(1) - the catalytic core - and F(0) - the membrane proton channel. F(1) has five subunits: alpha(3), beta(3), gamma(1), delta(1), epsilon(1). F(0) has three main subunits: a(1), b(2) and c(10-14). The alpha and beta chains form an alternating ring which encloses part of the gamma chain. F(1) is attached to F(0) by a central stalk formed by the gamma and epsilon chains, while a peripheral stalk is formed by the delta and b chains.

Its subcellular location is the cell membrane. In terms of biological role, f(1)F(0) ATP synthase produces ATP from ADP in the presence of a proton or sodium gradient. F-type ATPases consist of two structural domains, F(1) containing the extramembraneous catalytic core and F(0) containing the membrane proton channel, linked together by a central stalk and a peripheral stalk. During catalysis, ATP synthesis in the catalytic domain of F(1) is coupled via a rotary mechanism of the central stalk subunits to proton translocation. Its function is as follows. Key component of the F(0) channel; it plays a direct role in translocation across the membrane. A homomeric c-ring of between 10-14 subunits forms the central stalk rotor element with the F(1) delta and epsilon subunits. This chain is ATP synthase subunit c, found in Ruminiclostridium cellulolyticum (strain ATCC 35319 / DSM 5812 / JCM 6584 / H10) (Clostridium cellulolyticum).